A 389-amino-acid polypeptide reads, in one-letter code: Basigin (389 aa).

Positions 1–21 (MAAALLLALAFTLLSGQGACA) are cleaved as a signal peptide. Topologically, residues 22 to 325 (AAGFLKAPLS…ETISLRVRSR (304 aa)) are extracellular. Residues 37–120 (GGSVVLHCEA…SSDPDRNHLT (84 aa)) enclose the Ig-like domain. Disulfide bonds link C44/C108, C157/C203, and C242/C305. The 82-residue stretch at 138–219 (EPGTIQTSVQ…VGRSEINVEG (82 aa)) folds into the Ig-like C2-type domain. N-linked (GlcNAc...) asparagine glycosylation is found at N160, N270, and N306. The Ig-like V-type domain occupies 221-319 (PRIKVGKKSE…AQGTTRETIS (99 aa)). Residues 326-349 (MAALWPFLGIVAEVLVLVTIIFIY) traverse the membrane as a helical segment. Residues 350–389 (EKRRKPDQTLDEDDPGAAPLKGSGTHMNDKDKNVRQRNAT) are Cytoplasmic-facing. The interval 356–389 (DQTLDEDDPGAAPLKGSGTHMNDKDKNVRQRNAT) is disordered. T358 is modified (phosphothreonine). Phosphoserine is present on S372.

Interacts with NXNL1. Interacts with SLC2A1 and SLC16A1/GLUT1. Interacts with XKR8; promoting its localization at the cell membrane. In terms of assembly, interacts with ATP1B2, MAG and L1CAM. Interacts with SLC16A7. Interacts with VEGFA, KDR/VEGFR2, PPIA/CYPA, SLC1A3, SLC16A11 and SLC16A12. Interacts with PPIL2; regulates BSG transport to the cell membrane. Interacts with SLC16A1; interaction mediates SLC16A1 targeting to the plasma membrane. Interacts with SLC16A3; interaction mediates SLC16A3 targeting to the plasma membrane. As to quaternary structure, interacts with SLC16A6; this interaction mediates targeting to the plasma membrane. Post-translationally, N-glycosylated. In terms of processing, N-glycosylated. During spermatogenesis, probably deglycosylated during epididymal transit. As to expression, retina-specific. Expressed in both rods and cones (at protein level). Testis and caput, corpus and cauda epididymides (at protein level). Expressed in the brain, lung, liver, kidney, heart, spleen, uterus, retina and skeletal muscle.

It localises to the cell membrane. It is found in the photoreceptor inner segment. Its subcellular location is the cell projection. The protein localises to the cilium. The protein resides in the photoreceptor outer segment. It localises to the endoplasmic reticulum membrane. It is found in the basolateral cell membrane. In terms of biological role, essential for normal retinal maturation and development. Acts as a retinal cell surface receptor for NXNL1 and plays an important role in NXNL1-mediated survival of retinal cone photoreceptors. In association with glucose transporter SLC16A1/GLUT1 and NXNL1, promotes retinal cone survival by enhancing aerobic glycolysis and accelerating the entry of glucose into photoreceptors. Signaling receptor for cyclophilins, essential for PPIA/CYPA and PPIB/CYPB-dependent signaling related to chemotaxis and adhesion of immune cells. Plays an important role in targeting the monocarboxylate transporters SLC16A1, SLC16A3 and SLC16A8 to the plasma membrane. Acts as a coreceptor for vascular endothelial growth factor receptor 2 (KDR/VEGFR2) in endothelial cells enhancing its VEGFA-mediated activation and downstream signaling. Promotes angiogenesis through EPAS1/HIF2A-mediated up-regulation of VEGFA and KDR/VEGFR2 in endothelial cells. Plays an important role in spermatogenesis; mediates interactions between germ cells and Sertoli cell and is essential for the development/differentiation of germ cells to round spermatids. This chain is Basigin (Bsg), found in Mus musculus (Mouse).